The chain runs to 277 residues: Glutamate racemase (277 aa).

Substrate contacts are provided by residues 25–26 (DS) and 57–58 (YG). Residue C89 is the Proton donor/acceptor of the active site. Residue 90-91 (NT) coordinates substrate. Catalysis depends on C204, which acts as the Proton donor/acceptor. Residue 205–206 (TH) participates in substrate binding.

This sequence belongs to the aspartate/glutamate racemases family.

The catalysed reaction is L-glutamate = D-glutamate. It functions in the pathway cell wall biogenesis; peptidoglycan biosynthesis. In terms of biological role, provides the (R)-glutamate required for cell wall biosynthesis. This Brucella abortus (strain 2308) protein is Glutamate racemase.